The following is a 345-amino-acid chain: tRNA pseudouridine synthase B (345 aa).

Positions 1-33 are disordered; that stretch reads MGGNSQPHQEPRRVNNDPRAKQQKGNQVRRDRR. Positions 9–20 are enriched in basic and acidic residues; it reads QEPRRVNNDPRA. The Nucleophile role is filled by Asp-72.

This sequence belongs to the pseudouridine synthase TruB family. Type 1 subfamily.

The catalysed reaction is uridine(55) in tRNA = pseudouridine(55) in tRNA. Functionally, responsible for synthesis of pseudouridine from uracil-55 in the psi GC loop of transfer RNAs. The protein is tRNA pseudouridine synthase B of Bradyrhizobium diazoefficiens (strain JCM 10833 / BCRC 13528 / IAM 13628 / NBRC 14792 / USDA 110).